A 111-amino-acid chain; its full sequence is Wound-induced proteinase inhibitor 1 (111 aa).

The first 23 residues, 1–23 (MESKFAHIIVFFLLATSFETLMA), serve as a signal peptide directing secretion. Positions 24 to 36 (RKEIDGPEVIELL) are excised as a propeptide.

Belongs to the protease inhibitor I13 (potato type I serine protease inhibitor) family.

Its subcellular location is the secreted. This is Wound-induced proteinase inhibitor 1 (PIIF) from Solanum lycopersicum (Tomato).